A 734-amino-acid polypeptide reads, in one-letter code: Polyphosphate kinase (734 aa).

Asn67 contacts ATP. Residues Arg392 and Arg422 each contribute to the Mg(2+) site. The PLD phosphodiesterase domain maps to 447-481; the sequence is THLKTHSKIALVVKRINNELTSFVHLGTGNYNDKT. His452 acts as the Phosphohistidine intermediate in catalysis. ATP-binding residues include Tyr485, Arg581, and His609. The disordered stretch occupies residues 705 to 734; it reads KKQSVQPSGQPVHSRRGGSWMRKLKNTFKR.

This sequence belongs to the polyphosphate kinase 1 (PPK1) family. It depends on Mg(2+) as a cofactor. An intermediate of this reaction is the autophosphorylated ppk in which a phosphate is covalently linked to a histidine residue through a N-P bond.

It carries out the reaction [phosphate](n) + ATP = [phosphate](n+1) + ADP. In terms of biological role, catalyzes the reversible transfer of the terminal phosphate of ATP to form a long-chain polyphosphate (polyP). The sequence is that of Polyphosphate kinase from Staphylococcus epidermidis (strain ATCC 12228 / FDA PCI 1200).